We begin with the raw amino-acid sequence, 369 residues long: Flagellar P-ring protein (369 aa).

An N-terminal signal peptide occupies residues 1–23 (MRIASFFTVLLTLLTLNITPASA).

The protein belongs to the FlgI family. The basal body constitutes a major portion of the flagellar organelle and consists of four rings (L,P,S, and M) mounted on a central rod.

Its subcellular location is the periplasm. The protein localises to the bacterial flagellum basal body. Assembles around the rod to form the L-ring and probably protects the motor/basal body from shearing forces during rotation. In Pectobacterium atrosepticum (strain SCRI 1043 / ATCC BAA-672) (Erwinia carotovora subsp. atroseptica), this protein is Flagellar P-ring protein.